Reading from the N-terminus, the 644-residue chain is Chaperone protein DnaK (644 aa).

Thr-195 bears the Phosphothreonine; by autocatalysis mark. The segment at 598–644 (KQAAPGAGAPGAGPGPEAAGGAQQAQAEPKKDEGVIDAEYVDVDEKK) is disordered. Over residues 612–624 (GPEAAGGAQQAQA) the composition is skewed to low complexity. Residues 632 to 644 (VIDAEYVDVDEKK) are compositionally biased toward acidic residues.

This sequence belongs to the heat shock protein 70 family.

Its function is as follows. Acts as a chaperone. The sequence is that of Chaperone protein DnaK from Koribacter versatilis (strain Ellin345).